A 900-amino-acid chain; its full sequence is UPF0182 protein Ppro_3567 (900 aa).

Transmembrane regions (helical) follow at residues 15–35, 60–80, 112–132, 174–194, 210–230, 257–277, and 282–302; these read FFPL…LLNL, GAGL…LHVA, VSML…AMKW, FIIL…GGIL, LAVL…LDSF, VLTF…WKGV, and LLAP…YPGV.

This sequence belongs to the UPF0182 family.

It localises to the cell membrane. This chain is UPF0182 protein Ppro_3567, found in Pelobacter propionicus (strain DSM 2379 / NBRC 103807 / OttBd1).